The following is a 185-amino-acid chain: Anaphase-promoting complex subunit 10 (185 aa).

T2 bears the N-acetylthreonine mark. One can recognise a DOC domain in the interval 2–185; the sequence is TTPNKTPPGA…IDFMMYRSIR (184 aa). Position 169 is an N6-acetyllysine (K169).

It belongs to the APC10 family. The mammalian APC/C is composed at least of 14 distinct subunits ANAPC1, ANAPC2, CDC27/APC3, ANAPC4, ANAPC5, CDC16/APC6, ANAPC7, CDC23/APC8, ANAPC10, ANAPC11, CDC26/APC12, ANAPC13, ANAPC15 and ANAPC16 that assemble into a complex of at least 19 chains with a combined molecular mass of around 1.2 MDa; APC/C interacts with FZR1 and FBXO5. The C-terminus of APC10 binds to CDC27/APC3. Interacts with PIWIL1; interaction only takes place when PIWIL1 binds piRNA. Interacts with FBXO43; the interaction is direct.

It participates in protein modification; protein ubiquitination. Its function is as follows. Component of the anaphase promoting complex/cyclosome (APC/C), a cell cycle-regulated E3 ubiquitin ligase that controls progression through mitosis and the G1 phase of the cell cycle. The APC/C complex acts by mediating ubiquitination and subsequent degradation of target proteins: it mainly mediates the formation of 'Lys-11'-linked polyubiquitin chains and, to a lower extent, the formation of 'Lys-48'- and 'Lys-63'-linked polyubiquitin chains. The APC/C complex catalyzes assembly of branched 'Lys-11'-/'Lys-48'-linked branched ubiquitin chains on target proteins. This chain is Anaphase-promoting complex subunit 10 (ANAPC10), found in Homo sapiens (Human).